Reading from the N-terminus, the 149-residue chain is Large ribosomal subunit protein bL9 (149 aa).

This sequence belongs to the bacterial ribosomal protein bL9 family.

Binds to the 23S rRNA. This chain is Large ribosomal subunit protein bL9, found in Leptospira borgpetersenii serovar Hardjo-bovis (strain JB197).